The primary structure comprises 264 residues: Thymidylate synthase (264 aa).

Position 21 (Arg-21) interacts with dUMP. His-51 lines the (6R)-5,10-methylene-5,6,7,8-tetrahydrofolate pocket. Position 126–127 (126–127 (RR)) interacts with dUMP. The active-site Nucleophile is Cys-146. Residues 166–169 (RSCD), Asn-177, and 207–209 (HLY) each bind dUMP. Asp-169 contributes to the (6R)-5,10-methylene-5,6,7,8-tetrahydrofolate binding site. Position 263 (Ala-263) interacts with (6R)-5,10-methylene-5,6,7,8-tetrahydrofolate.

This sequence belongs to the thymidylate synthase family. Bacterial-type ThyA subfamily. As to quaternary structure, homodimer.

The protein localises to the cytoplasm. The catalysed reaction is dUMP + (6R)-5,10-methylene-5,6,7,8-tetrahydrofolate = 7,8-dihydrofolate + dTMP. The protein operates within pyrimidine metabolism; dTTP biosynthesis. Its function is as follows. Catalyzes the reductive methylation of 2'-deoxyuridine-5'-monophosphate (dUMP) to 2'-deoxythymidine-5'-monophosphate (dTMP) while utilizing 5,10-methylenetetrahydrofolate (mTHF) as the methyl donor and reductant in the reaction, yielding dihydrofolate (DHF) as a by-product. This enzymatic reaction provides an intracellular de novo source of dTMP, an essential precursor for DNA biosynthesis. The polypeptide is Thymidylate synthase (Baumannia cicadellinicola subsp. Homalodisca coagulata).